Consider the following 476-residue polypeptide: Probable protein S-acyltransferase 5 (476 aa).

Residues 1–11 (MLDLQPSDRRH) show a composition bias toward basic and acidic residues. Positions 1–21 (MLDLQPSDRRHGAPSSSGGVS) are disordered. 2 helical membrane passes run 53–73 (SILI…IFVG) and 85–105 (GVSV…FLLL). Residues 119-138 (YPPEPESNEGNGEPRLAHTP) form a disordered region. In terms of domain architecture, DHHC spans 158 to 208 (KYCDTCMLYRPPRASHCSICNNCVEKFDHHCPWLGQCIGLRNYRFYFMFVL). Cys188 (S-palmitoyl cysteine intermediate) is an active-site residue. 2 helical membrane-spanning segments follow: residues 209–223 (CSTL…FCWI) and 246–266 (SIAL…LTCF). Disordered regions lie at residues 320–340 (SKEP…PSLQ) and 373–454 (VASR…ASRD). Phosphoserine is present on Ser336. Over residues 387–412 (SEGRGIMHSRESSRGRGIMHSRESSR) the composition is skewed to basic and acidic residues. Phosphoserine is present on Ser418. Basic and acidic residues predominate over residues 425 to 441 (VNEDLRTRDESVSRVGE).

Belongs to the DHHC palmitoyltransferase family.

It is found in the cell membrane. It carries out the reaction L-cysteinyl-[protein] + hexadecanoyl-CoA = S-hexadecanoyl-L-cysteinyl-[protein] + CoA. Its function is as follows. Palmitoyl acyltransferase. The chain is Probable protein S-acyltransferase 5 (PAT05) from Arabidopsis thaliana (Mouse-ear cress).